The sequence spans 239 residues: 1-(5-phosphoribosyl)-5-[(5-phosphoribosylamino)methylideneamino] imidazole-4-carboxamide isomerase (239 aa).

Residue Asp-8 is the Proton acceptor of the active site. Asp-129 functions as the Proton donor in the catalytic mechanism.

It belongs to the HisA/HisF family.

The protein resides in the cytoplasm. The catalysed reaction is 1-(5-phospho-beta-D-ribosyl)-5-[(5-phospho-beta-D-ribosylamino)methylideneamino]imidazole-4-carboxamide = 5-[(5-phospho-1-deoxy-D-ribulos-1-ylimino)methylamino]-1-(5-phospho-beta-D-ribosyl)imidazole-4-carboxamide. The protein operates within amino-acid biosynthesis; L-histidine biosynthesis; L-histidine from 5-phospho-alpha-D-ribose 1-diphosphate: step 4/9. This chain is 1-(5-phosphoribosyl)-5-[(5-phosphoribosylamino)methylideneamino] imidazole-4-carboxamide isomerase, found in Legionella pneumophila (strain Corby).